Here is a 449-residue protein sequence, read N- to C-terminus: Tripartite motif-containing protein 64 (449 aa).

An RING-type zinc finger spans residues 15-56 (CCICVNYFIDPVTIDCGHSFCRPCLCLCSEEGRAPMRCPSCR). The segment at 87–128 (SSDNICVLHEETKELFCEADKRLLCGPCSESPEHMAHSHSPI) adopts a B box-type zinc-finger fold. C92, H95, C114, and H120 together coordinate Zn(2+). The stretch at 189–225 (LDEEEQRHLQALEREAEELFQQLQDSQVRMTQHLERM) forms a coiled coil. Residues 269-449 (LTSWCITGVL…LRPFFCFGCT (181 aa)) form the B30.2/SPRY domain.

Belongs to the TRIM/RBCC family.

This is Tripartite motif-containing protein 64 (TRIM64) from Homo sapiens (Human).